The following is a 292-amino-acid chain: MASLKDMRVRIASTKATQKITKAMQMVAASKLRRAQSAAEAARPYAEKMDQVISNIASAAAGSPGAPVLLGGTGKDQVHLLLVCTGERGLSGAFNSSIVRLARERALALMNQGKDVKFFCVGRKGYEQLRRTFEKQIVENVELRSVRQLGFVNAEAIAKKVIARFNAGEFDVCTLFYSRFKSVIAQVPTAQQIIPLEVEAPAANAGPAPFYEYEPEEDEILTRLLPRNLAVQIFRALLENNASFYGAQMSAMDNATRNAGDMIRKQTLVYNRTRQAMITKELIEIISGAEAI.

Belongs to the ATPase gamma chain family. As to quaternary structure, F-type ATPases have 2 components, CF(1) - the catalytic core - and CF(0) - the membrane proton channel. CF(1) has five subunits: alpha(3), beta(3), gamma(1), delta(1), epsilon(1). CF(0) has three main subunits: a, b and c.

It is found in the cell inner membrane. Its function is as follows. Produces ATP from ADP in the presence of a proton gradient across the membrane. The gamma chain is believed to be important in regulating ATPase activity and the flow of protons through the CF(0) complex. In Nitrobacter hamburgensis (strain DSM 10229 / NCIMB 13809 / X14), this protein is ATP synthase gamma chain.